A 284-amino-acid chain; its full sequence is ATP phosphoribosyltransferase (284 aa).

This sequence belongs to the ATP phosphoribosyltransferase family. Long subfamily. The cofactor is Mg(2+).

It localises to the cytoplasm. It catalyses the reaction 1-(5-phospho-beta-D-ribosyl)-ATP + diphosphate = 5-phospho-alpha-D-ribose 1-diphosphate + ATP. It participates in amino-acid biosynthesis; L-histidine biosynthesis; L-histidine from 5-phospho-alpha-D-ribose 1-diphosphate: step 1/9. Its activity is regulated as follows. Feedback inhibited by histidine. In terms of biological role, catalyzes the condensation of ATP and 5-phosphoribose 1-diphosphate to form N'-(5'-phosphoribosyl)-ATP (PR-ATP). Has a crucial role in the pathway because the rate of histidine biosynthesis seems to be controlled primarily by regulation of HisG enzymatic activity. The sequence is that of ATP phosphoribosyltransferase from Methanococcoides burtonii (strain DSM 6242 / NBRC 107633 / OCM 468 / ACE-M).